Here is a 921-residue protein sequence, read N- to C-terminus: Sodium/calcium exchanger 2 (921 aa).

A signal peptide spans Met1–Gly20. Residues Thr23–Gly42 form a disordered region. A helical membrane pass occupies residues Val69–Ile89. N-linked (GlcNAc...) asparagine glycans are attached at residues Asn125 and Asn130. A run of 4 helical transmembrane segments spans residues Leu131–Cys151, Ile165–Pro185, Val197–Ala217, and Val226–Ala246. Residues Lys248–Gly267 are putative calmodulin-binding region. Positions His371–Asp391 are disordered. Calx-beta domains are found at residues Glu389–Leu482 and Ala512–Leu611. The Ca(2+) site is built by Glu407, Asp443, Asp468, Asp469, Ile471, Glu473, Glu476, Asp518, Asp519, Asp520, Glu536, Asp598, Glu599, and Glu600. At Ser622 the chain carries Phosphoserine. Glu665 provides a ligand contact to Ca(2+). 6 helical membrane passes run Cys721–Pro741, Trp749–Leu769, Val786–Leu806, Ala823–Val843, Leu855–Tyr875, and Leu893–Glu913.

Belongs to the Ca(2+):cation antiporter (CaCA) (TC 2.A.19) family. SLC8 subfamily. As to expression, detected in kidney cortex, in distal convoluted tubules and connecting segments. Detected in brain and spinal cord (at protein level). Detected in brain, especially in hippocampus CA1, CA2 and CA3 fiels, dentate gyrus, cerebellum and brain cortex.

It is found in the cell membrane. Its subcellular location is the basolateral cell membrane. The catalysed reaction is Ca(2+)(in) + 3 Na(+)(out) = Ca(2+)(out) + 3 Na(+)(in). Calcium transport is down-regulated by Na(+) and stimulated by Ca(2+). Mediates the electrogenic exchange of Ca(2+) against Na(+) ions across the cell membrane, and thereby contributes to the regulation of cytoplasmic Ca(2+) levels and Ca(2+)-dependent cellular processes. Contributes to cellular Ca(2+) homeostasis in excitable cells. Contributes to the rapid decrease of cytoplasmic Ca(2+) levels back to baseline after neuronal activation, and thereby contributes to modulate synaptic plasticity, learning and memory. Plays a role in regulating urinary Ca(2+) and Na(+) excretion. The sequence is that of Sodium/calcium exchanger 2 from Mus musculus (Mouse).